A 151-amino-acid chain; its full sequence is Superoxide dismutase [Cu-Zn] A (151 aa).

Residue cysteine 6 is the site of S-palmitoyl cysteine attachment. Cu cation-binding residues include histidine 45, histidine 47, and histidine 62. Cysteine 56 and cysteine 144 are oxidised to a cystine. Zn(2+) contacts are provided by histidine 62, histidine 70, histidine 79, and aspartate 82. A Cu cation-binding site is contributed by histidine 118.

This sequence belongs to the Cu-Zn superoxide dismutase family. Homodimer, and heterodimer of Superoxide dismutase [Cu-Zn] A and B. The cofactor is Cu cation. Requires Zn(2+) as cofactor.

It localises to the cytoplasm. Its subcellular location is the nucleus. It carries out the reaction 2 superoxide + 2 H(+) = H2O2 + O2. In terms of biological role, destroys radicals which are normally produced within the cells and which are toxic to biological systems. This Xenopus laevis (African clawed frog) protein is Superoxide dismutase [Cu-Zn] A (sod1-a).